A 745-amino-acid polypeptide reads, in one-letter code: NAD(P)H-quinone oxidoreductase subunit 5, chloroplastic (745 aa).

The next 16 membrane-spanning stretches (helical) occupy residues 9–29 (WIIP…LLLF), 50–70 (WAFP…DLSI), 99–119 (IDSL…FVLI), 135–155 (FAYM…CNLI), 157–177 (IYIF…FWFT), 194–214 (IGDF…GSFE), 229–249 (NEVH…GAVA), 268–288 (TPIS…FLVA), 290–310 (LFPL…IGII), 337–357 (LGYM…FHLI), 364–384 (ALLF…VGYS), 406–426 (IAFL…CFWS), 435–455 (WLYS…TAFY), 550–570 (LFPM…AIPF), 610–630 (FSVS…KPFY), and 724–744 (FYLL…YFIL).

It belongs to the complex I subunit 5 family. In terms of assembly, NDH is composed of at least 16 different subunits, 5 of which are encoded in the nucleus.

It localises to the plastid. The protein resides in the chloroplast thylakoid membrane. It catalyses the reaction a plastoquinone + NADH + (n+1) H(+)(in) = a plastoquinol + NAD(+) + n H(+)(out). It carries out the reaction a plastoquinone + NADPH + (n+1) H(+)(in) = a plastoquinol + NADP(+) + n H(+)(out). Functionally, NDH shuttles electrons from NAD(P)H:plastoquinone, via FMN and iron-sulfur (Fe-S) centers, to quinones in the photosynthetic chain and possibly in a chloroplast respiratory chain. The immediate electron acceptor for the enzyme in this species is believed to be plastoquinone. Couples the redox reaction to proton translocation, and thus conserves the redox energy in a proton gradient. This chain is NAD(P)H-quinone oxidoreductase subunit 5, chloroplastic (ndhF), found in Gossypium barbadense (Sea Island cotton).